A 491-amino-acid chain; its full sequence is Protein nucleotidyltransferase YdiU (491 aa).

ATP contacts are provided by Gly-94, Gly-96, Arg-97, Lys-117, Asp-129, Gly-130, Arg-180, and Arg-187. Catalysis depends on Asp-256, which acts as the Proton acceptor. Residues Asn-257 and Asp-266 each contribute to the Mg(2+) site. Residue Asp-266 participates in ATP binding.

This sequence belongs to the SELO family. Requires Mg(2+) as cofactor. It depends on Mn(2+) as a cofactor.

The enzyme catalyses L-seryl-[protein] + ATP = 3-O-(5'-adenylyl)-L-seryl-[protein] + diphosphate. It carries out the reaction L-threonyl-[protein] + ATP = 3-O-(5'-adenylyl)-L-threonyl-[protein] + diphosphate. The catalysed reaction is L-tyrosyl-[protein] + ATP = O-(5'-adenylyl)-L-tyrosyl-[protein] + diphosphate. It catalyses the reaction L-histidyl-[protein] + UTP = N(tele)-(5'-uridylyl)-L-histidyl-[protein] + diphosphate. The enzyme catalyses L-seryl-[protein] + UTP = O-(5'-uridylyl)-L-seryl-[protein] + diphosphate. It carries out the reaction L-tyrosyl-[protein] + UTP = O-(5'-uridylyl)-L-tyrosyl-[protein] + diphosphate. Nucleotidyltransferase involved in the post-translational modification of proteins. It can catalyze the addition of adenosine monophosphate (AMP) or uridine monophosphate (UMP) to a protein, resulting in modifications known as AMPylation and UMPylation. In Clostridium botulinum (strain Loch Maree / Type A3), this protein is Protein nucleotidyltransferase YdiU.